We begin with the raw amino-acid sequence, 119 residues long: Acidic phospholipase A2 DE-III (119 aa).

Cystine bridges form between Cys-11–Cys-72, Cys-26–Cys-118, Cys-28–Cys-44, Cys-43–Cys-99, Cys-50–Cys-92, Cys-60–Cys-85, and Cys-79–Cys-90. Residues Tyr-27, Gly-29, and Gly-31 each contribute to the Ca(2+) site. The active site involves His-47. Asp-48 is a Ca(2+) binding site. Residue Asp-93 is part of the active site.

It belongs to the phospholipase A2 family. Group I subfamily. D49 sub-subfamily. Ca(2+) is required as a cofactor. In terms of tissue distribution, expressed by the venom gland.

The protein localises to the secreted. The enzyme catalyses a 1,2-diacyl-sn-glycero-3-phosphocholine + H2O = a 1-acyl-sn-glycero-3-phosphocholine + a fatty acid + H(+). In terms of biological role, PLA2 catalyzes the calcium-dependent hydrolysis of the 2-acyl groups in 3-sn-phosphoglycerides. This Naja melanoleuca (Forest cobra) protein is Acidic phospholipase A2 DE-III.